The primary structure comprises 63 residues: Muscarinic toxin 2 (63 aa).

Cystine bridges form between Cys3-Cys22, Cys17-Cys42, Cys44-Cys55, and Cys56-Cys61.

This sequence belongs to the three-finger toxin family. Short-chain subfamily. Type B muscarinic toxin sub-subfamily. As to quaternary structure, monomer. Expressed by the venom gland.

It localises to the secreted. Functionally, blocks M2 muscarinic acetylcholine receptors (CHRM2). Fully blocks the binding of N-methylscopolamine (NMS) and oxotremorine-M to M2 receptors, slightly increased NMS binding to M1 receptors. The chain is Muscarinic toxin 2 from Dendroaspis angusticeps (Eastern green mamba).